The following is a 116-amino-acid chain: uncharacterized protein (116 aa).

A signal peptide spans 1–15; sequence MKKYFLILASFMLVA.

This is an uncharacterized protein from Haemophilus influenzae (strain ATCC 51907 / DSM 11121 / KW20 / Rd).